The primary structure comprises 647 residues: Exoribonuclease 2 (647 aa).

Residues Arg190–Lys519 enclose the RNB domain. The region spanning Glu564–Val646 is the S1 motif domain.

The protein belongs to the RNR ribonuclease family. RNase II subfamily.

The protein resides in the cytoplasm. It carries out the reaction Exonucleolytic cleavage in the 3'- to 5'-direction to yield nucleoside 5'-phosphates.. Its function is as follows. Involved in mRNA degradation. Hydrolyzes single-stranded polyribonucleotides processively in the 3' to 5' direction. The polypeptide is Exoribonuclease 2 (Erwinia tasmaniensis (strain DSM 17950 / CFBP 7177 / CIP 109463 / NCPPB 4357 / Et1/99)).